The following is a 680-amino-acid chain: DNA-directed RNA polymerase subunit beta' (680 aa).

C69, C71, C87, and C90 together coordinate Zn(2+). Mg(2+) contacts are provided by D489, D491, and D493.

Belongs to the RNA polymerase beta' chain family. RpoC1 subfamily. As to quaternary structure, in plastids the minimal PEP RNA polymerase catalytic core is composed of four subunits: alpha, beta, beta', and beta''. When a (nuclear-encoded) sigma factor is associated with the core the holoenzyme is formed, which can initiate transcription. Requires Mg(2+) as cofactor. It depends on Zn(2+) as a cofactor.

The protein localises to the plastid. The protein resides in the chloroplast. The catalysed reaction is RNA(n) + a ribonucleoside 5'-triphosphate = RNA(n+1) + diphosphate. DNA-dependent RNA polymerase catalyzes the transcription of DNA into RNA using the four ribonucleoside triphosphates as substrates. In Ceratophyllum demersum (Rigid hornwort), this protein is DNA-directed RNA polymerase subunit beta'.